A 347-amino-acid polypeptide reads, in one-letter code: N-acetyl-gamma-glutamyl-phosphate reductase (347 aa).

The active site involves Cys150.

This sequence belongs to the NAGSA dehydrogenase family. Type 1 subfamily.

It is found in the cytoplasm. It catalyses the reaction N-acetyl-L-glutamate 5-semialdehyde + phosphate + NADP(+) = N-acetyl-L-glutamyl 5-phosphate + NADPH + H(+). The protein operates within amino-acid biosynthesis; L-arginine biosynthesis; N(2)-acetyl-L-ornithine from L-glutamate: step 3/4. In terms of biological role, catalyzes the NADPH-dependent reduction of N-acetyl-5-glutamyl phosphate to yield N-acetyl-L-glutamate 5-semialdehyde. The chain is N-acetyl-gamma-glutamyl-phosphate reductase from Halothermothrix orenii (strain H 168 / OCM 544 / DSM 9562).